The chain runs to 240 residues: Cytochrome c-551 (240 aa).

Positions 41, 44, 45, 128, 132, and 133 each coordinate heme c.

In terms of processing, binds 2 heme c groups per subunit.

The protein is Cytochrome c-551 of Rhodocyclus tenuis (Rhodospirillum tenue).